The sequence spans 315 residues: MNFNHEPVMIEKTIELLKPESAQVIVDGTMGGAGHSLRIINSLPPEGILVGIDQDPDAYEAGKSLLEAYGNKAKVFNDNFVNIKHICERIGIHYVDGILLDLGVSSYQLDNKDRGFTYQENAPLDMRMDKSQKITASEVVNTYSEQKLAEIIREYGEEKWAQRIAQFIVQARQDQEINTTQELVKVIKAAIPKGARKSGPHPAKRTFQALRIHVNGELDSLRTAIQEGIRLLRGKGRFVVITFHSLEDRIVKQEFKKLAQTCVCPTKLPICQCKGEATVKLLTKKPLLPSQGEIEINPRARSAKLRAVERLGSNN.

S-adenosyl-L-methionine is bound by residues 33 to 35, Asp53, Phe80, Asp101, and Gln108; that span reads AGH.

It belongs to the methyltransferase superfamily. RsmH family.

The protein resides in the cytoplasm. The catalysed reaction is cytidine(1402) in 16S rRNA + S-adenosyl-L-methionine = N(4)-methylcytidine(1402) in 16S rRNA + S-adenosyl-L-homocysteine + H(+). Functionally, specifically methylates the N4 position of cytidine in position 1402 (C1402) of 16S rRNA. This Natranaerobius thermophilus (strain ATCC BAA-1301 / DSM 18059 / JW/NM-WN-LF) protein is Ribosomal RNA small subunit methyltransferase H.